A 345-amino-acid chain; its full sequence is Green-sensitive opsin (345 aa).

The Extracellular segment spans residues 1-37; it reads MENGTEGKNFYIPMNNRTGLVRSPYEYPQYYLADPWQ. N-linked (GlcNAc...) asparagine glycosylation is found at N3 and N16. The chain crosses the membrane as a helical span at residues 38–62; the sequence is FKLLGIYMFFLILTGFPINALTLVV. Residues 63-74 are Cytoplasmic-facing; that stretch reads TAQNKKLRQPLN. A helical transmembrane segment spans residues 75-100; the sequence is FILVNLAVAGLIMVCFGFTVCIYSCM. Residues 101-114 are Extracellular-facing; sequence VGYFSLGPLGCTIE. A disulfide bridge links C111 with C188. Residues 115–134 form a helical membrane-spanning segment; that stretch reads GFMATLGGQVSLWSLVVLAI. The Cytoplasmic segment spans residues 135–153; that stretch reads ERYIVVCKPMGSFKFTATH. A helical transmembrane segment spans residues 154–177; sequence SAAGCAFTWIMASSCAVPPLVGWS. The Extracellular segment spans residues 178–203; that stretch reads RYIPEGIQVSCGPDYYTLAPGFNNES. A glycan (N-linked (GlcNAc...) asparagine) is linked at N201. Residues 204-231 traverse the membrane as a helical segment; that stretch reads FVMYMFSCHFCVPVFTIFFTYGSLVMTV. Residues 232 to 253 lie on the Cytoplasmic side of the membrane; it reads KAAAAQQQDSASTQKAEKEVTR. A helical membrane pass occupies residues 254–277; it reads MCFLMVLGFLLAWVPYASYAAWIF. Topologically, residues 278–285 are extracellular; sequence FNRGAAFS. A helical membrane pass occupies residues 286 to 310; sequence AMSMAIPSFFSKSSALFNPIIYILL. The residue at position 297 (K297) is an N6-(retinylidene)lysine. Over 311-345 the chain is Cytoplasmic; sequence NKQFRNCMLATIGMGGMVEDETSVSTSKTEVSTAA.

It belongs to the G-protein coupled receptor 1 family. Opsin subfamily. Post-translationally, phosphorylated on some or all of the serine and threonine residues present in the C-terminal region. In terms of tissue distribution, the color pigments are found in the cone photoreceptor cells.

Its subcellular location is the membrane. Its function is as follows. Visual pigments are the light-absorbing molecules that mediate vision. They consist of an apoprotein, opsin, covalently linked to cis-retinal. The sequence is that of Green-sensitive opsin from Oryzias latipes (Japanese rice fish).